The primary structure comprises 235 residues: Probable carboxylesterase Os04g0669600 (235 aa).

Residues serine 113, aspartate 167, and histidine 199 each act as charge relay system in the active site.

The protein belongs to the AB hydrolase superfamily. AB hydrolase 2 family.

Functionally, possesses carboxylesterase activity in vitro. The polypeptide is Probable carboxylesterase Os04g0669600 (Oryza sativa subsp. japonica (Rice)).